Here is a 693-residue protein sequence, read N- to C-terminus: DNA ligase (693 aa).

NAD(+)-binding positions include 43 to 47 (DEEYD), 92 to 93 (SL), and Glu-123. Lys-125 (N6-AMP-lysine intermediate) is an active-site residue. NAD(+) is bound by residues Arg-146, Glu-180, Lys-296, and Lys-320. 4 residues coordinate Zn(2+): Cys-414, Cys-417, Cys-433, and Cys-438. The region spanning 595–684 (VKYDVLKGLT…AKLKGYNFDE (90 aa)) is the BRCT domain.

Belongs to the NAD-dependent DNA ligase family. LigA subfamily. Requires Mg(2+) as cofactor. Mn(2+) serves as cofactor.

The enzyme catalyses NAD(+) + (deoxyribonucleotide)n-3'-hydroxyl + 5'-phospho-(deoxyribonucleotide)m = (deoxyribonucleotide)n+m + AMP + beta-nicotinamide D-nucleotide.. In terms of biological role, DNA ligase that catalyzes the formation of phosphodiester linkages between 5'-phosphoryl and 3'-hydroxyl groups in double-stranded DNA using NAD as a coenzyme and as the energy source for the reaction. It is essential for DNA replication and repair of damaged DNA. The chain is DNA ligase from Thermotoga neapolitana (strain ATCC 49049 / DSM 4359 / NBRC 107923 / NS-E).